We begin with the raw amino-acid sequence, 641 residues long: ATP-dependent zinc metalloprotease FtsH 2 (641 aa).

At 1–100 (MLAYYVSVNQ…IDVKVIHNFW (100 aa)) the chain is on the periplasmic side. The chain crosses the membrane as a helical span at residues 101-121 (GQAFLSVLPFLLFILALYFLF). The Cytoplasmic portion of the chain corresponds to 122–641 (RQQIRMAGRG…LLPGLEGAPA (520 aa)). 193–200 (GPPGTGKT) provides a ligand contact to ATP. H415 contacts Zn(2+). E416 is a catalytic residue. H419 and D491 together coordinate Zn(2+). The segment at 593-641 (KTGKMTNPPSKNSSPVSNGGEASSTKSPARQEETTKDGGLLPGLEGAPA) is disordered. Low complexity-rich tracts occupy residues 599 to 610 (NPPSKNSSPVSN) and 630 to 641 (GGLLPGLEGAPA).

This sequence in the central section; belongs to the AAA ATPase family. It in the C-terminal section; belongs to the peptidase M41 family. As to quaternary structure, homohexamer. Zn(2+) serves as cofactor.

The protein resides in the cell inner membrane. Its function is as follows. Acts as a processive, ATP-dependent zinc metallopeptidase for both cytoplasmic and membrane proteins. Plays a role in the quality control of integral membrane proteins. The sequence is that of ATP-dependent zinc metalloprotease FtsH 2 from Methylacidiphilum infernorum (isolate V4) (Methylokorus infernorum (strain V4)).